A 406-amino-acid polypeptide reads, in one-letter code: Erythromycin esterase type I (406 aa).

In terms of biological role, this enzyme confers resistance to erythromycin through inactivation by hydrolyzing the lactone ring of the antibiotic. The sequence is that of Erythromycin esterase type I (ereA) from Escherichia coli.